The chain runs to 642 residues: Threonine--tRNA ligase (642 aa).

One can recognise a TGS domain in the interval 1 to 61 (MPVITLPDGS…ETDSDLSIIT (61 aa)). The catalytic stretch occupies residues 243–534 (DHRKIGKQLD…LIEEYAGKFP (292 aa)). Residues C334, H385, and H511 each contribute to the Zn(2+) site.

Belongs to the class-II aminoacyl-tRNA synthetase family. Homodimer. The cofactor is Zn(2+).

The protein localises to the cytoplasm. It catalyses the reaction tRNA(Thr) + L-threonine + ATP = L-threonyl-tRNA(Thr) + AMP + diphosphate + H(+). Catalyzes the attachment of threonine to tRNA(Thr) in a two-step reaction: L-threonine is first activated by ATP to form Thr-AMP and then transferred to the acceptor end of tRNA(Thr). Also edits incorrectly charged L-seryl-tRNA(Thr). The polypeptide is Threonine--tRNA ligase (Shewanella pealeana (strain ATCC 700345 / ANG-SQ1)).